Consider the following 227-residue polypeptide: PKHD-type hydroxylase Mnod_1077 (227 aa).

A Fe2OG dioxygenase domain is found at 78-178; sequence RVLPPLFNRY…RWSAFFWSQS (101 aa). 3 residues coordinate Fe cation: His-96, Asp-98, and His-159. Residue Arg-169 participates in 2-oxoglutarate binding.

The cofactor is Fe(2+). L-ascorbate is required as a cofactor.

This is PKHD-type hydroxylase Mnod_1077 from Methylobacterium nodulans (strain LMG 21967 / CNCM I-2342 / ORS 2060).